A 507-amino-acid chain; its full sequence is ATP synthase subunit alpha, chloroplastic (507 aa).

170 to 177 (GDRQTGKT) is an ATP binding site.

The protein belongs to the ATPase alpha/beta chains family. As to quaternary structure, F-type ATPases have 2 components, CF(1) - the catalytic core - and CF(0) - the membrane proton channel. CF(1) has five subunits: alpha(3), beta(3), gamma(1), delta(1), epsilon(1). CF(0) has four main subunits: a, b, b' and c.

It localises to the plastid. The protein resides in the chloroplast thylakoid membrane. It catalyses the reaction ATP + H2O + 4 H(+)(in) = ADP + phosphate + 5 H(+)(out). Functionally, produces ATP from ADP in the presence of a proton gradient across the membrane. The alpha chain is a regulatory subunit. The polypeptide is ATP synthase subunit alpha, chloroplastic (Nicotiana tabacum (Common tobacco)).